A 158-amino-acid polypeptide reads, in one-letter code: Large ribosomal subunit protein uL11 (158 aa).

It belongs to the universal ribosomal protein uL11 family. In terms of assembly, part of the ribosomal stalk of the 50S ribosomal subunit. Interacts with L10 and the large rRNA to form the base of the stalk. L10 forms an elongated spine to which L12 dimers bind in a sequential fashion forming a multimeric L10(L12)X complex.

Functionally, forms part of the ribosomal stalk which helps the ribosome interact with GTP-bound translation factors. The sequence is that of Large ribosomal subunit protein uL11 from Methanoregula boonei (strain DSM 21154 / JCM 14090 / 6A8).